A 475-amino-acid chain; its full sequence is Aspartyl/glutamyl-tRNA(Asn/Gln) amidotransferase subunit B (475 aa).

This sequence belongs to the GatB/GatE family. GatB subfamily. Heterotrimer of A, B and C subunits.

It catalyses the reaction L-glutamyl-tRNA(Gln) + L-glutamine + ATP + H2O = L-glutaminyl-tRNA(Gln) + L-glutamate + ADP + phosphate + H(+). The enzyme catalyses L-aspartyl-tRNA(Asn) + L-glutamine + ATP + H2O = L-asparaginyl-tRNA(Asn) + L-glutamate + ADP + phosphate + 2 H(+). Functionally, allows the formation of correctly charged Asn-tRNA(Asn) or Gln-tRNA(Gln) through the transamidation of misacylated Asp-tRNA(Asn) or Glu-tRNA(Gln) in organisms which lack either or both of asparaginyl-tRNA or glutaminyl-tRNA synthetases. The reaction takes place in the presence of glutamine and ATP through an activated phospho-Asp-tRNA(Asn) or phospho-Glu-tRNA(Gln). This Chlorobium phaeobacteroides (strain DSM 266 / SMG 266 / 2430) protein is Aspartyl/glutamyl-tRNA(Asn/Gln) amidotransferase subunit B.